We begin with the raw amino-acid sequence, 428 residues long: MVKMNMTEKILAEAAGLREVTPGEIIEARVDLAMTHDGTSPPTIRTFRDIASRGGPARVWDPERIVMVFDHNVPANTIGAAEFQRVTREFAREQGIVNIFQNAAGICHQVLPERGFVRPGMVIVGADSHTCTYGAFGAFATGMGATDMAMVFATGKTWFMVPEAMRIEVTGEPEGHVYAKDVILHIIGEIGVDGATYRSVEFTGDTIESMDVSGRMTICNMAVEMGAKNGIMEPNRQTLDYVRARTGREFRVYSSDEDSQYLEDHHFDVSDLEPQVACPDDVDNVYPVHRVEGTHIDEAFLGSCTNGRYEDLKIAAEVIGDRRVHEDVRFIVSPASREIYLKALEDGIIETFIRAGAIVCNPGCGPCLGAHMGVLAPGEVSIATTNRNFRGRMGDPASSVYLANPAVVAESAIEGVISAPQQEAGNGC.

Positions 304, 364, and 367 each coordinate [4Fe-4S] cluster.

It belongs to the aconitase/IPM isomerase family. LeuC type 2 subfamily. Heterotetramer of 2 HacA and 2 HacB proteins.

It catalyses the reaction (2R)-homocitrate = (2R,3S)-homoisocitrate. The enzyme catalyses (2R)-homocitrate = cis-homoaconitate + H2O. The catalysed reaction is (2R,3S)-homoisocitrate = cis-homoaconitate + H2O. It carries out the reaction cis-(homo)2aconitate + H2O = (2R,3S)-iso(homo)2citrate. It catalyses the reaction cis-(homo)3aconitate + H2O = (2R,3S)-iso(homo)3citrate. It participates in organic acid metabolism; 2-oxosuberate biosynthesis. Its function is as follows. Component of a hydro-lyase with broad substrate specificity for cis-unsaturated tricarboxylic acids. Catalyzes both the reversible dehydration of (R)-homocitrate ((R)-2-hydroxybutane-1,2,4-tricarboxylate) to produce cis-homoaconitate ((Z)-but-1-ene-1,2,4-tricarboxylate), and its hydration to homoisocitrate ((1R,2S)-1-hydroxybutane-1,2,4-tricarboxylate). Is also able to hydrate the analogous longer chain substrates cis-homo(2)-aconitate, cis-homo(3)-aconitate. These reactions are part of the biosynthesis pathway of coenzyme B. This is Probable methanogen homoaconitase large subunit (hacA) from Methanothermobacter thermautotrophicus (strain ATCC 29096 / DSM 1053 / JCM 10044 / NBRC 100330 / Delta H) (Methanobacterium thermoautotrophicum).